The following is a 312-amino-acid chain: Retron Ec83 reverse transcriptase (312 aa).

The 226-residue stretch at 14 to 239 (PDFDVLLKSR…HNRHVTGVTL (226 aa)) folds into the Reverse transcriptase domain. Mg(2+)-binding residues include aspartate 97, aspartate 185, and aspartate 186.

It belongs to the bacterial reverse transcriptase family.

It catalyses the reaction DNA(n) + a 2'-deoxyribonucleoside 5'-triphosphate = DNA(n+1) + diphosphate. Reverse transcriptase (RT) component of antiviral defense system retron Ec83, composed of a non-coding RNA (ncRNA), this reverse transcriptase (RT), a probable ATPase and a putative HNH endonuclease. Expression of retron Ec83 confers protection against bacteriophages T2, T4 and T6. At multiplicity of infection (MOI) of 0.02 cultures slow growth when infected with T4 but do not collapse, at MOI 2 cultures enter growth stasis. Responsible for synthesis of msDNA-Ec83 (a linear ssDNA with a 5'-terminal phosphate residue). Unlike most known msDNAs the mature product from the original strain does not have an RNA component. When the ncRNA plus RT are expressed in strain K12 / JM109 only linear DNA is seen in stationary phase cells, but logarithmic phase cells have both a linear and branched msDNA (a branched molecule with RNA linked by a 2',5'-phosphodiester bond to ssDNA, a 'classic' retron). The branched msDNA is probably the precursor for the mature linear msDNA, the precursor is cleaved endonucleolytically by ExoVII (xseA-xseB) leaving the observed mature 5'-phosphate ssDNA terminus. The retron transcript serves as primer (from a conserved internal G residue) and template for the reaction, and codes for the RT. Overexpression of the ncRNA and RT, which leads to increased levels of msDNA, is mutagenic in vivo. This may be due to a mismatch in the msDNA stem which binds and sequesters MutS and/or MutL. This Escherichia coli protein is Retron Ec83 reverse transcriptase.